We begin with the raw amino-acid sequence, 402 residues long: Flavohemoprotein (402 aa).

The 138-residue stretch at 1-138 (MLSPEVRALV…LADLLIGRER (138 aa)) folds into the Globin domain. Histidine 85 serves as a coordination point for heme b. Residues tyrosine 95 and glutamate 137 each act as charge relay system in the active site. The interval 149–402 (GGWTGWRAFK…AEVFGTGGVA (254 aa)) is reductase. Residues 152 to 261 (TGWRAFKVVR…SPPQGDFTLD (110 aa)) form the FAD-binding FR-type domain. FAD contacts are provided by residues tyrosine 190 and 206-209 (RQYS). 274-279 (GVGLTP) is an NADP(+) binding site. FAD is bound at residue 395 to 398 (VFGT).

This sequence belongs to the globin family. Two-domain flavohemoproteins subfamily. In the C-terminal section; belongs to the flavoprotein pyridine nucleotide cytochrome reductase family. Heme b is required as a cofactor. FAD serves as cofactor.

The enzyme catalyses 2 nitric oxide + NADPH + 2 O2 = 2 nitrate + NADP(+) + H(+). It catalyses the reaction 2 nitric oxide + NADH + 2 O2 = 2 nitrate + NAD(+) + H(+). Functionally, is involved in NO detoxification in an aerobic process, termed nitric oxide dioxygenase (NOD) reaction that utilizes O(2) and NAD(P)H to convert NO to nitrate, which protects the bacterium from various noxious nitrogen compounds. Therefore, plays a central role in the inducible response to nitrosative stress. The sequence is that of Flavohemoprotein from Bordetella pertussis (strain Tohama I / ATCC BAA-589 / NCTC 13251).